A 432-amino-acid polypeptide reads, in one-letter code: UDP-glucosyltransferase B1 (432 aa).

Belongs to the UDP-glycosyltransferase family.

It carries out the reaction (9Z)-17-hydroxyoctadec-9-enoate 17-O-beta-D-glucoside + UDP-alpha-D-glucose = (9Z)-17-hydroxyoctadec-9-enoate 17-O-sophoroside + UDP + H(+). Catalyzes the second glycosylation step of sophorolipid biosynthesis, the further glucosylation of the previoulsy formed glucolipid to give rise to an acidic sophorolipid. In Starmerella bombicola (Yeast), this protein is UDP-glucosyltransferase B1.